The primary structure comprises 227 residues: 2,3-bisphosphoglycerate-dependent phosphoglycerate mutase (227 aa).

Residues 7–14, 20–21, Arg59, 86–89, Lys97, 113–114, and 182–183 each bind substrate; these read RHGQSEWN, TG, ERHY, RR, and GN. Catalysis depends on His8, which acts as the Tele-phosphohistidine intermediate. Glu86 serves as the catalytic Proton donor/acceptor.

Belongs to the phosphoglycerate mutase family. BPG-dependent PGAM subfamily. In terms of assembly, homodimer.

It carries out the reaction (2R)-2-phosphoglycerate = (2R)-3-phosphoglycerate. It functions in the pathway carbohydrate degradation; glycolysis; pyruvate from D-glyceraldehyde 3-phosphate: step 3/5. In terms of biological role, catalyzes the interconversion of 2-phosphoglycerate and 3-phosphoglycerate. The protein is 2,3-bisphosphoglycerate-dependent phosphoglycerate mutase of Neisseria gonorrhoeae (strain ATCC 700825 / FA 1090).